Here is a 509-residue protein sequence, read N- to C-terminus: Probable DNA ligase (509 aa).

Asp-218 is an ATP binding site. The N6-AMP-lysine intermediate role is filled by Lys-220. ATP-binding residues include Arg-225, Arg-240, Glu-269, Phe-302, Arg-374, and Lys-380.

This sequence belongs to the ATP-dependent DNA ligase family. Mg(2+) is required as a cofactor.

It carries out the reaction ATP + (deoxyribonucleotide)n-3'-hydroxyl + 5'-phospho-(deoxyribonucleotide)m = (deoxyribonucleotide)n+m + AMP + diphosphate.. DNA ligase that seals nicks in double-stranded DNA during DNA replication, DNA recombination and DNA repair. This chain is Probable DNA ligase, found in Nocardioides sp. (strain ATCC BAA-499 / JS614).